A 187-amino-acid polypeptide reads, in one-letter code: MEKKETKNETEKTNKQDNKNTKSQKKENLNLVNSDKKITELENEISNLKDLYLRKQAEFENFRKRLEKEKDNFVKFANETIMKDVVNFLDNLERAINSSKKSKDFDNLLTGISMIENEILSIFDKKYNLKKFGENGENFDPSRHEAISIEEKEDFKNPEIVEVYQKGYCYNDRILRTAKVKVAQSKN.

The interval 1 to 30 is disordered; that stretch reads MEKKETKNETEKTNKQDNKNTKSQKKENLN.

It belongs to the GrpE family. As to quaternary structure, homodimer.

It is found in the cytoplasm. Participates actively in the response to hyperosmotic and heat shock by preventing the aggregation of stress-denatured proteins, in association with DnaK and GrpE. It is the nucleotide exchange factor for DnaK and may function as a thermosensor. Unfolded proteins bind initially to DnaJ; upon interaction with the DnaJ-bound protein, DnaK hydrolyzes its bound ATP, resulting in the formation of a stable complex. GrpE releases ADP from DnaK; ATP binding to DnaK triggers the release of the substrate protein, thus completing the reaction cycle. Several rounds of ATP-dependent interactions between DnaJ, DnaK and GrpE are required for fully efficient folding. The sequence is that of Protein GrpE from Borreliella afzelii (strain PKo) (Borrelia afzelii).